A 400-amino-acid chain; its full sequence is Acetate kinase (400 aa).

Asn10 serves as a coordination point for Mg(2+). An ATP-binding site is contributed by Lys17. Arg91 is a substrate binding site. Asp150 functions as the Proton donor/acceptor in the catalytic mechanism. ATP-binding positions include 210 to 214 (HLGNG), 285 to 287 (DCR), and 333 to 337 (GIGEN). Residue Glu387 coordinates Mg(2+).

This sequence belongs to the acetokinase family. Homodimer. Mg(2+) serves as cofactor. Requires Mn(2+) as cofactor.

The protein resides in the cytoplasm. The catalysed reaction is acetate + ATP = acetyl phosphate + ADP. The protein operates within metabolic intermediate biosynthesis; acetyl-CoA biosynthesis; acetyl-CoA from acetate: step 1/2. In terms of biological role, catalyzes the formation of acetyl phosphate from acetate and ATP. Can also catalyze the reverse reaction. In Escherichia coli O157:H7, this protein is Acetate kinase.